The chain runs to 967 residues: Aminopeptidase N (967 aa).

Residues 2-8 lie on the Cytoplasmic side of the membrane; sequence AKGFYIS. A helical; Signal-anchor for type II membrane protein transmembrane segment spans residues 9-32; the sequence is KSLGILGILLGVAAVCTIIALSVV. Residues 33–68 form a cytosolic Ser/Thr-rich junction region; the sequence is YSQEKNKNANSSPVASTTPSASATTNPASATTLDQS. Topologically, residues 33–967 are extracellular; it reads YSQEKNKNAN…VLQWFTENSK (935 aa). Residues 40–62 are disordered; sequence NANSSPVASTTPSASATTNPASA. The segment covering 41-62 has biased composition (low complexity); sequence ANSSPVASTTPSASATTNPASA. The interval 69 to 967 is metalloprotease; the sequence is KAWNRYRLPN…VLQWFTENSK (899 aa). The N-linked (GlcNAc...) asparagine glycan is linked to N128. Sulfotyrosine is present on Y176. Residues N234 and N265 are each glycosylated (N-linked (GlcNAc...) asparagine). Residues 288 to 295 form a necessary and sufficient to mediate interaction with HCoV-229E region; that stretch reads DYVEKQAS. An N-linked (GlcNAc...) asparagine glycan is attached at N319. Substrate is bound at residue 352-356; sequence GAMEN. H388 lines the Zn(2+) pocket. The active-site Proton acceptor is E389. Zn(2+) contacts are provided by H392 and E411. Y419 and Y424 each carry sulfotyrosine. N527, N573, N625, N681, and N735 each carry an N-linked (GlcNAc...) asparagine glycan. Disulfide bonds link C761-C768 and C798-C834. N818 carries an N-linked (GlcNAc...) asparagine glycan. Residue Y913 is modified to Sulfotyrosine.

This sequence belongs to the peptidase M1 family. In terms of assembly, homodimer. Interacts with SLC6A19. (Microbial infection) Interacts with the S1 domain of human coronavirus 229E/HCoV-229E spike protein. Zn(2+) is required as a cofactor. Post-translationally, sulfated. In terms of processing, N- and O-glycosylated. May undergo proteolysis and give rise to a soluble form. Expressed in epithelial cells of the kidney, intestine, and respiratory tract; granulocytes, monocytes, fibroblasts, endothelial cells, cerebral pericytes at the blood-brain barrier, synaptic membranes of cells in the CNS. Also expressed in endometrial stromal cells, but not in the endometrial glandular cells. Found in the vasculature of tissues that undergo angiogenesis and in malignant gliomas and lymph node metastases from multiple tumor types but not in blood vessels of normal tissues. A soluble form has been found in plasma. It is found to be elevated in plasma and effusions of cancer patients.

It localises to the cell membrane. The enzyme catalyses Release of an N-terminal amino acid, Xaa-|-Yaa- from a peptide, amide or arylamide. Xaa is preferably Ala, but may be most amino acids including Pro (slow action). When a terminal hydrophobic residue is followed by a prolyl residue, the two may be released as an intact Xaa-Pro dipeptide.. In terms of biological role, broad specificity aminopeptidase which plays a role in the final digestion of peptides generated from hydrolysis of proteins by gastric and pancreatic proteases. Also involved in the processing of various peptides including peptide hormones, such as angiotensin III and IV, neuropeptides, and chemokines. May also be involved the cleavage of peptides bound to major histocompatibility complex class II molecules of antigen presenting cells. May have a role in angiogenesis and promote cholesterol crystallization. May have a role in amino acid transport by acting as binding partner of amino acid transporter SLC6A19 and regulating its activity. Its function is as follows. (Microbial infection) Acts as a receptor for human coronavirus 229E/HCoV-229E. In case of human coronavirus 229E (HCoV-229E) infection, serves as receptor for HCoV-229E spike glycoprotein. Functionally, (Microbial infection) Mediates as well Human cytomegalovirus (HCMV) infection. The sequence is that of Aminopeptidase N (ANPEP) from Homo sapiens (Human).